A 105-amino-acid polypeptide reads, in one-letter code: Large ribosomal subunit protein uL24 (105 aa).

A disordered region spans residues Met-1 to Ser-25.

The protein belongs to the universal ribosomal protein uL24 family. As to quaternary structure, part of the 50S ribosomal subunit.

One of two assembly initiator proteins, it binds directly to the 5'-end of the 23S rRNA, where it nucleates assembly of the 50S subunit. In terms of biological role, one of the proteins that surrounds the polypeptide exit tunnel on the outside of the subunit. This chain is Large ribosomal subunit protein uL24, found in Staphylococcus saprophyticus subsp. saprophyticus (strain ATCC 15305 / DSM 20229 / NCIMB 8711 / NCTC 7292 / S-41).